A 233-amino-acid chain; its full sequence is UPF0173 metal-dependent hydrolase Acid345_3437 (233 aa).

The protein belongs to the UPF0173 family.

In Koribacter versatilis (strain Ellin345), this protein is UPF0173 metal-dependent hydrolase Acid345_3437.